A 321-amino-acid polypeptide reads, in one-letter code: Thymidylate synthase (321 aa).

The interval 1-32 is disordered; sequence MVLTPTKDGPDQESMPLPADNGESPSKQQAPV. Phosphoserine is present on residues Ser-24 and Ser-26. Tyr-39 is subject to Phosphotyrosine. Residues Arg-56 and 181–182 contribute to the dUMP site; that span reads RR. Cys-201 acts as the Nucleophile in catalysis. At Tyr-208 the chain carries Phosphotyrosine. Ser-210 carries the post-translational modification Phosphoserine. Residues 223 to 226, Asn-234, and 264 to 266 each bind dUMP; these read RSAD and HVY. (6R)-5,10-methylene-5,6,7,8-tetrahydrofolate is bound at residue Asp-226. (6R)-5,10-methylene-5,6,7,8-tetrahydrofolate is bound at residue Ala-320.

Belongs to the thymidylate synthase family. As to quaternary structure, homodimer.

The enzyme catalyses dUMP + (6R)-5,10-methylene-5,6,7,8-tetrahydrofolate = 7,8-dihydrofolate + dTMP. Its pathway is pyrimidine metabolism; dTTP biosynthesis. The polypeptide is Thymidylate synthase (Ts) (Drosophila melanogaster (Fruit fly)).